Consider the following 180-residue polypeptide: Ribulose bisphosphate carboxylase small subunit, chloroplastic 2 (180 aa).

Residues 1–56 (MASSVMSSAAVATSTNAAQASMVAPFTGLKSAASFPVSRKQNLDITSIASNGGRVQ) constitute a chloroplast transit peptide.

Belongs to the RuBisCO small chain family. As to quaternary structure, heterohexadecamer of 8 large and 8 small subunits.

It localises to the plastid. The protein resides in the chloroplast. RuBisCO catalyzes two reactions: the carboxylation of D-ribulose 1,5-bisphosphate, the primary event in carbon dioxide fixation, as well as the oxidative fragmentation of the pentose substrate. Both reactions occur simultaneously and in competition at the same active site. Although the small subunit is not catalytic it is essential for maximal activity. The protein is Ribulose bisphosphate carboxylase small subunit, chloroplastic 2 of Petunia hybrida (Petunia).